A 205-amino-acid polypeptide reads, in one-letter code: MTKRSEAKYKIDRRMGQNIWGRPKSPVNRREYGPGQHGQRRKGKLSDFGVQLRAKQKLKGYYANISERQFHGIYVEASRLKGDTGENLIGLLERRLDAVVYRAKFVSTIFAARQFINHGHIKVNGRKVNISSYQLKVGDVVEVKEASKQLAHVLEASQLPERDTPDYLDVDHGKMTAKYIRIPGLSDVPFPVQMEPHLVVEFYSR.

Positions 18–46 are disordered; sequence NIWGRPKSPVNRREYGPGQHGQRRKGKLS. One can recognise an S4 RNA-binding domain in the interval 94–154; that stretch reads RRLDAVVYRA…EASKQLAHVL (61 aa).

Belongs to the universal ribosomal protein uS4 family. Part of the 30S ribosomal subunit. Contacts protein S5. The interaction surface between S4 and S5 is involved in control of translational fidelity.

In terms of biological role, one of the primary rRNA binding proteins, it binds directly to 16S rRNA where it nucleates assembly of the body of the 30S subunit. Functionally, with S5 and S12 plays an important role in translational accuracy. The polypeptide is Small ribosomal subunit protein uS4 (Bradyrhizobium diazoefficiens (strain JCM 10833 / BCRC 13528 / IAM 13628 / NBRC 14792 / USDA 110)).